The primary structure comprises 779 residues: Ribonucleoside-diphosphate reductase large subunit (779 aa).

Substrate-binding positions include serine 178, 193–194, glycine 222, 420–424, and 614–618; these read SC, NLCIE, and PTATS. A disulfide bridge connects residues cysteine 194 and cysteine 440. Asparagine 420 functions as the Proton acceptor in the catalytic mechanism. The active-site Cysteine radical intermediate is cysteine 422. Catalysis depends on glutamate 424, which acts as the Proton acceptor.

Belongs to the ribonucleoside diphosphate reductase large chain family. As to quaternary structure, heterotetramer composed of a homodimer of the large subunit (R1) and a homodimer of the small subunit (R2). Larger multisubunit protein complex are also active, composed of (R1)n(R2)n.

It catalyses the reaction a 2'-deoxyribonucleoside 5'-diphosphate + [thioredoxin]-disulfide + H2O = a ribonucleoside 5'-diphosphate + [thioredoxin]-dithiol. Under complex allosteric control mediated by deoxynucleoside triphosphates and ATP binding. The type of nucleotide bound at the specificity site determines substrate preference. It seems probable that ATP makes the enzyme reduce CDP and UDP, dGTP favors ADP reduction and dTTP favors GDP reduction. In terms of biological role, ribonucleoside-diphosphate reductase holoenzyme provides the precursors necessary for viral DNA synthesis. Allows virus growth in non-dividing cells. Catalyzes the biosynthesis of deoxyribonucleotides from the corresponding ribonucleotides. The protein is Ribonucleoside-diphosphate reductase large subunit of Ornithodoros (relapsing fever ticks).